The following is a 274-amino-acid chain: Rhamnulose-1-phosphate aldolase (274 aa).

Glu117 is a catalytic residue. His141, His143, and His212 together coordinate Zn(2+).

The protein belongs to the aldolase class II family. RhaD subfamily. In terms of assembly, homotetramer. The cofactor is Zn(2+).

The protein resides in the cytoplasm. The catalysed reaction is L-rhamnulose 1-phosphate = (S)-lactaldehyde + dihydroxyacetone phosphate. It participates in carbohydrate degradation; L-rhamnose degradation; glycerone phosphate from L-rhamnose: step 3/3. Catalyzes the reversible cleavage of L-rhamnulose-1-phosphate to dihydroxyacetone phosphate (DHAP) and L-lactaldehyde. This is Rhamnulose-1-phosphate aldolase from Escherichia coli O45:K1 (strain S88 / ExPEC).